The primary structure comprises 68 residues: MGKVRTKIVKRTARELLEKYPNLFTRDFEHNKKVVSKLIETKSKKLRNQIAGYITHLVGIKLKRQIQA.

The protein belongs to the eukaryotic ribosomal protein eS17 family.

The chain is Small ribosomal subunit protein eS17 from Staphylothermus marinus (strain ATCC 43588 / DSM 3639 / JCM 9404 / F1).